A 467-amino-acid chain; its full sequence is MKKLLLNTLIGLALLTCQTSFAQKTKAKFSPIKVETPARPANQQDVIQLVTPKLETVRVGFIGLGMRGPGAVERWTHIPGTQIVALCDLLPERVENAQKILEKAGLPKAASYAGDEKAWKKLCERDDIDVVYIATDWKHHADMGVYAMEHGKHVAIEVPAAMTLDEIWKLINTSEKTRKHCMQLENCVYDFFELTSLNMAQQGVFGEVLHVEGAYIHNLEDFWPYYWNNWRMDYNQKHRGDVYATHGMGPACQVLNIHRGDRMKTLVAMDTKAVNGPAYIKKSTGKEVKDFQNGDQTTTLIRTENGKTMLIQHNVMTPRPYSRMYQVVGADGYASKYPIEEYCLRPTQVDSNDVPNHEKLNAHGSVSEDVKKALMAKYKDPIHKELEETAKKVGGHGGMDYIMDYRLVYCLRNGLPLDMDVYDLAEWCCMAELTRLSIENGSAPVEVPDFTRGGWNKVQGYRHAFAE.

Positions 1-22 are cleaved as a signal peptide; the sequence is MKKLLLNTLIGLALLTCQTSFA. NAD(+) is bound by residues 66-67, Asp-88, 137-140, 157-158, and Asn-186; these read MR, WKHH, and EV. Substrate is bound by residues Tyr-215, Arg-231, 243–246, and Tyr-321; that span reads YATH. An NAD(+)-binding site is contributed by Tyr-243.

This sequence belongs to the Gfo/Idh/MocA family. Glycosyl hydrolase 109 subfamily. NAD(+) serves as cofactor.

Glycosidase. This chain is Glycosyl hydrolase family 109 protein 1, found in Bacteroides thetaiotaomicron (strain ATCC 29148 / DSM 2079 / JCM 5827 / CCUG 10774 / NCTC 10582 / VPI-5482 / E50).